A 277-amino-acid polypeptide reads, in one-letter code: Urease accessory protein UreD (277 aa).

This sequence belongs to the UreD family. As to quaternary structure, ureD, UreF and UreG form a complex that acts as a GTP-hydrolysis-dependent molecular chaperone, activating the urease apoprotein by helping to assemble the nickel containing metallocenter of UreC. The UreE protein probably delivers the nickel.

The protein resides in the cytoplasm. In terms of biological role, required for maturation of urease via the functional incorporation of the urease nickel metallocenter. The protein is Urease accessory protein UreD of Pseudomonas putida (strain ATCC 47054 / DSM 6125 / CFBP 8728 / NCIMB 11950 / KT2440).